Consider the following 129-residue polypeptide: uncharacterized protein (129 aa).

The next 3 membrane-spanning stretches (helical) occupy residues 49 to 69, 72 to 92, and 101 to 118; these read LWSL…IVGV, FTIF…NLIF, and YFNC…NLLQ.

It is found in the membrane. This is an uncharacterized protein from Saccharomyces cerevisiae (strain ATCC 204508 / S288c) (Baker's yeast).